The sequence spans 704 residues: Phosphate acetyltransferase (704 aa).

Residues 379–704 are phosphate acetyltransferase; it reads AFRYQVVQRA…AIQADAQAPA (326 aa).

It in the N-terminal section; belongs to the CobB/CobQ family. This sequence in the C-terminal section; belongs to the phosphate acetyltransferase and butyryltransferase family. Homohexamer.

The protein localises to the cytoplasm. The enzyme catalyses acetyl-CoA + phosphate = acetyl phosphate + CoA. It participates in metabolic intermediate biosynthesis; acetyl-CoA biosynthesis; acetyl-CoA from acetate: step 2/2. Its activity is regulated as follows. Activity is increased under anaerobic growth conditions. Its function is as follows. Involved in acetate metabolism. In combination with LdhA and AckA, allows fermentation of pyruvate, enhancing long-term survival under anaerobic conditions. In Pseudomonas aeruginosa (strain ATCC 15692 / DSM 22644 / CIP 104116 / JCM 14847 / LMG 12228 / 1C / PRS 101 / PAO1), this protein is Phosphate acetyltransferase (pta).